A 128-amino-acid chain; its full sequence is Small ribosomal subunit protein uS11 (128 aa).

The protein belongs to the universal ribosomal protein uS11 family. In terms of assembly, part of the 30S ribosomal subunit. Interacts with proteins S7 and S18. Binds to IF-3.

In terms of biological role, located on the platform of the 30S subunit, it bridges several disparate RNA helices of the 16S rRNA. Forms part of the Shine-Dalgarno cleft in the 70S ribosome. In Solidesulfovibrio magneticus (strain ATCC 700980 / DSM 13731 / RS-1) (Desulfovibrio magneticus), this protein is Small ribosomal subunit protein uS11.